The following is a 316-amino-acid chain: MTVQRKKISLIGAGNIGGALAHMVTLRELGDVVLFDVNDGIPQGKALDIAESSPIGGFSVNIIGTNRYGDIKNSDAIIITAGIARKPGMSRDDLLQTNAKVMKEVGENIRKYSPNAFVIVVTNPLDAMVSVVHKFSNLPANMIVGMAGVLDSSRFRYFLARELNISVEDVSAFVLGGHGDTMVPLIRCASIAGIPLTQIIDMGLITQEKVDEIVKRTRNGGKEIIDLLKSGSAYYAPASSSIYMLESYLRDEKRILPCATYLNGEYGVKDLFIGVPVIIGKNGIEKVLEVKMDDSEQEMFNKSVNAVKELVKSLSL.

NAD(+) is bound by residues 12–17 (GAGNIG) and D36. Residues R85 and R91 each contribute to the substrate site. NAD(+) is bound by residues N98 and 121–123 (VTN). N123 and R154 together coordinate substrate. H178 acts as the Proton acceptor in catalysis.

This sequence belongs to the LDH/MDH superfamily. MDH type 3 family.

It catalyses the reaction (S)-malate + NAD(+) = oxaloacetate + NADH + H(+). Its function is as follows. Catalyzes the reversible oxidation of malate to oxaloacetate. This is Malate dehydrogenase from Wolbachia sp. subsp. Brugia malayi (strain TRS).